We begin with the raw amino-acid sequence, 129 residues long: Phosphoribosyl-AMP cyclohydrolase (129 aa).

D77 lines the Mg(2+) pocket. C78 provides a ligand contact to Zn(2+). Positions 79 and 81 each coordinate Mg(2+). 2 residues coordinate Zn(2+): C94 and C101.

Belongs to the PRA-CH family. As to quaternary structure, homodimer. Mg(2+) is required as a cofactor. It depends on Zn(2+) as a cofactor.

Its subcellular location is the cytoplasm. The enzyme catalyses 1-(5-phospho-beta-D-ribosyl)-5'-AMP + H2O = 1-(5-phospho-beta-D-ribosyl)-5-[(5-phospho-beta-D-ribosylamino)methylideneamino]imidazole-4-carboxamide. It functions in the pathway amino-acid biosynthesis; L-histidine biosynthesis; L-histidine from 5-phospho-alpha-D-ribose 1-diphosphate: step 3/9. In terms of biological role, catalyzes the hydrolysis of the adenine ring of phosphoribosyl-AMP. The polypeptide is Phosphoribosyl-AMP cyclohydrolase (Methanosphaera stadtmanae (strain ATCC 43021 / DSM 3091 / JCM 11832 / MCB-3)).